The following is a 592-amino-acid chain: K(+) efflux antiporter 4 (592 aa).

A signal peptide spans 1-35; the sequence is MRRCKNNTDKFSVITMRLLTLLLICTFFFFFSFAY. 12 consecutive transmembrane segments (helical) span residues 169–189, 193–213, 221–241, 248–268, 279–299, 313–333, 343–363, 388–408, 437–457, 462–482, 491–511, and 535–555; these read LISDLVVVIVSATCGGIAFAC, PVITGYLLAGSIIGPGGLSFV, TVAQFGVIFLLFALGLEFSAA, AVAIPGGLLQIFLFMCLSGIT, GIFVGAFLSMSSTAVVLKFLM, VGTLILQDCAVGLLFALLPVL, VLSMAKSLAILIAFLGALFVL, LAAVAFCLLVAWCSDKLGLSL, NFFAALFLASIGMLIHMHFLW, ILLAAVLLVIVIKTVVVAIVV, TAVLVGMSLAQIGEFAFVLLS, and LVTTPLLFKLIPAVVHLGVLL.

It belongs to the monovalent cation:proton antiporter 2 (CPA2) transporter (TC 2.A.37) family. KEA (TC 2.A.37.1) subfamily. As to expression, expressed in roots, stems, leaves, flowers and silique.

The protein resides in the golgi apparatus membrane. The protein localises to the golgi apparatus. Its subcellular location is the trans-Golgi network membrane. It is found in the prevacuolar compartment membrane. It localises to the endomembrane system. It carries out the reaction K(+)(in) + H(+)(out) = K(+)(out) + H(+)(in). In terms of biological role, electroneutral K(+)/H(+) efflux antiporter involved in K(+) homeostasis and osmotic adjustment. Together with KEA5 and KEA6, promotes growth and development, and facilitates endosomal pH and ions homeostasis, as well as salt tolerance (e.g. K(+), NaCl and LiCl), probably by supporting cell wall biosynthesis during rapid etiolated seedling growth. The chain is K(+) efflux antiporter 4 from Arabidopsis thaliana (Mouse-ear cress).